We begin with the raw amino-acid sequence, 180 residues long: MKKIALAGLAGMLLVSASVNAMSISGQAGKEYTNIGVGFGTETTGLALSGNWTHNDDDGDVAGVGLGLNLPLGPLMATVGGKGVYTNPNYGDEGYAAAVGGGLQWKIGNSFRLFGEYYYSPDSLSSGIQSYEEANAGARYTIMRPVSIEAGYRYLNLSGKDGNRDNAVADGPYVGVNASF.

The first 21 residues, 1–21 (MKKIALAGLAGMLLVSASVNA), serve as a signal peptide directing secretion.

The protein localises to the cell outer membrane. The sequence is that of Outer membrane protein YfaZ (yfaZ) from Escherichia coli (strain K12).